The chain runs to 114 residues: Probable prefoldin subunit 2 (114 aa).

Belongs to the prefoldin subunit beta family. Heterohexamer of two PFD-alpha type and four PFD-beta type subunits.

Functionally, binds specifically to cytosolic chaperonin (c-CPN) and transfers target proteins to it. Binds to nascent polypeptide chain and promotes folding in an environment in which there are many competing pathways for nonnative proteins. The protein is Probable prefoldin subunit 2 of Schizosaccharomyces pombe (strain 972 / ATCC 24843) (Fission yeast).